The chain runs to 413 residues: Serpin A12 (413 aa).

Positions 1–20 (MTRMLDLGLFLAGLLTVKGL) are cleaved as a signal peptide. N-linked (GlcNAc...) asparagine glycosylation is found at Asn-92 and Asn-267. Positions 364–382 (GMEGAAGSGAQTLPMETPR) are reactive center loop.

This sequence belongs to the serpin family. As to quaternary structure, forms a stable complex with KLK7. Post-translationally, glycosylation slightly decreases affinity for heparin, but otherwise has no significant effect on KLK7 inhibitory activity or thermal stability of the protein. As to expression, expressed in visceral adipose tissues.

It is found in the secreted. Inhibition of KLK7 is enhanced by heparin. Its function is as follows. Adipokine that modulates insulin action by specifically inhibiting its target protease KLK7 in white adipose tissues. This is Serpin A12 (Serpina12) from Mus musculus (Mouse).